Consider the following 464-residue polypeptide: Argininosuccinate lyase (464 aa).

Belongs to the lyase 1 family. Argininosuccinate lyase subfamily.

The protein resides in the cytoplasm. It catalyses the reaction 2-(N(omega)-L-arginino)succinate = fumarate + L-arginine. It participates in amino-acid biosynthesis; L-arginine biosynthesis; L-arginine from L-ornithine and carbamoyl phosphate: step 3/3. With respect to regulation, strongly inhibited by L-arginine. Inhibitory effects are lowered at pH 7.0 compared to those at pH 8.0. At 37 degrees Celsius and pH 7.5, activity decreases to 73% and 31% in the presence of 1 mM and 10 mM arginine, respectively. Activity also decreases to 84%, 93%, 82% and 85% in the presence of 10 mM sodium citrate, citrulline, asparatate and glutamate, respectively. Activity decreases to 96% in presence of 1 mM L-lysine. Functionally, catalyzes the last step of arginine biosynthesis, the conversion of argininosuccinate into L-arginine and fumarate. In Arthrospira platensis (strain NIES-39 / UTEX 3086 / IAM M-135) (Spirulina platensis), this protein is Argininosuccinate lyase.